The sequence spans 430 residues: Gamma-glutamyl phosphate reductase (430 aa).

The protein belongs to the gamma-glutamyl phosphate reductase family.

The protein resides in the cytoplasm. It catalyses the reaction L-glutamate 5-semialdehyde + phosphate + NADP(+) = L-glutamyl 5-phosphate + NADPH + H(+). It functions in the pathway amino-acid biosynthesis; L-proline biosynthesis; L-glutamate 5-semialdehyde from L-glutamate: step 2/2. Catalyzes the NADPH-dependent reduction of L-glutamate 5-phosphate into L-glutamate 5-semialdehyde and phosphate. The product spontaneously undergoes cyclization to form 1-pyrroline-5-carboxylate. This is Gamma-glutamyl phosphate reductase from Corynebacterium diphtheriae (strain ATCC 700971 / NCTC 13129 / Biotype gravis).